Reading from the N-terminus, the 324-residue chain is Beta-ketoacyl-[acyl-carrier-protein] synthase III (324 aa).

Catalysis depends on residues cysteine 112 and histidine 249. Positions glutamine 250–arginine 254 are ACP-binding. The active site involves asparagine 279.

The protein belongs to the thiolase-like superfamily. FabH family. Homodimer.

It is found in the cytoplasm. It catalyses the reaction malonyl-[ACP] + acetyl-CoA + H(+) = 3-oxobutanoyl-[ACP] + CO2 + CoA. It functions in the pathway lipid metabolism; fatty acid biosynthesis. In terms of biological role, catalyzes the condensation reaction of fatty acid synthesis by the addition to an acyl acceptor of two carbons from malonyl-ACP. Catalyzes the first condensation reaction which initiates fatty acid synthesis and may therefore play a role in governing the total rate of fatty acid production. Possesses both acetoacetyl-ACP synthase and acetyl transacylase activities. Its substrate specificity determines the biosynthesis of branched-chain and/or straight-chain of fatty acids. This is Beta-ketoacyl-[acyl-carrier-protein] synthase III from Streptococcus gordonii (strain Challis / ATCC 35105 / BCRC 15272 / CH1 / DL1 / V288).